A 101-amino-acid polypeptide reads, in one-letter code: MNSIVNFSQQLIQNFQEVSQRTAADSSNLKAFAYLGAGLAMIGVIGVGAGQGYAAGKACDAIARNPEAQKQVFRVLVIGTAISETSSIYALLVALILIFVG.

2 helical membrane-spanning segments follow: residues 31–51 (AFAY…GAGQ) and 81–101 (AISE…IFVG).

Belongs to the ATPase C chain family. In terms of assembly, F-type ATPases have 2 components, F(1) - the catalytic core - and F(0) - the membrane proton channel. F(1) has five subunits: alpha(3), beta(3), gamma(1), delta(1), epsilon(1). F(0) has three main subunits: a(1), b(2) and c(10-14). The alpha and beta chains form an alternating ring which encloses part of the gamma chain. F(1) is attached to F(0) by a central stalk formed by the gamma and epsilon chains, while a peripheral stalk is formed by the delta and b chains.

It is found in the cell membrane. Its function is as follows. F(1)F(0) ATP synthase produces ATP from ADP in the presence of a proton or sodium gradient. F-type ATPases consist of two structural domains, F(1) containing the extramembraneous catalytic core and F(0) containing the membrane proton channel, linked together by a central stalk and a peripheral stalk. During catalysis, ATP synthesis in the catalytic domain of F(1) is coupled via a rotary mechanism of the central stalk subunits to proton translocation. Key component of the F(0) channel; it plays a direct role in translocation across the membrane. A homomeric c-ring of between 10-14 subunits forms the central stalk rotor element with the F(1) delta and epsilon subunits. This chain is ATP synthase subunit c, found in Mesomycoplasma hyopneumoniae (strain J / ATCC 25934 / NCTC 10110) (Mycoplasma hyopneumoniae).